We begin with the raw amino-acid sequence, 221 residues long: Interleukin-12 subunit alpha (221 aa).

Positions 1–25 are cleaved as a signal peptide; the sequence is MCPLRSLLLISTLVLLHHLPHLSLG. Intrachain disulfides connect cysteine 39-cysteine 112, cysteine 66-cysteine 198, and cysteine 87-cysteine 125. An N-linked (GlcNAc...) asparagine glycan is attached at asparagine 95.

This sequence belongs to the IL-6 superfamily. As to quaternary structure, heterodimer with IL12B; disulfide-linked. This heterodimer is known as interleukin IL-12. Heterodimer with EBI3/IL27B; not disulfide-linked. This heterodimer is known as interleukin IL-35. Interacts with NBR1; this interaction promotes IL-12 secretion.

The protein localises to the secreted. Its function is as follows. Heterodimerizes with IL12B to form the IL-12 cytokine or with EBI3/IL27B to form the IL-35 cytokine. IL-12 is primarily produced by professional antigen-presenting cells (APCs) such as B-cells and dendritic cells (DCs) as well as macrophages and granulocytes and regulates T-cell and natural killer-cell responses, induces the production of interferon-gamma (IFN-gamma), favors the differentiation of T-helper 1 (Th1) cells and is an important link between innate resistance and adaptive immunity. Mechanistically, exerts its biological effects through a receptor composed of IL12R1 and IL12R2 subunits. Binding to the receptor results in the rapid tyrosine phosphorylation of a number of cellular substrates including the JAK family kinases TYK2 and JAK2. In turn, recruited STAT4 gets phosphorylated and translocates to the nucleus where it regulates cytokine/growth factor responsive genes. As part of IL-35, plays essential roles in maintaining the immune homeostasis of the liver microenvironment and also functions as an immune-suppressive cytokine. Mediates biological events through unconventional receptors composed of IL12RB2 and gp130/IL6ST heterodimers or homodimers. Signaling requires the transcription factors STAT1 and STAT4, which form a unique heterodimer that binds to distinct DNA sites. The protein is Interleukin-12 subunit alpha (IL12A) of Capra hircus (Goat).